A 302-amino-acid chain; its full sequence is UDP-N-acetylenolpyruvoylglucosamine reductase (302 aa).

The FAD-binding PCMH-type domain maps to 32 to 195 (LGGPADLLAR…VTVTLELVPD (164 aa)). Arg-175 is a catalytic residue. Ser-224 (proton donor) is an active-site residue. Residue Glu-294 is part of the active site.

The protein belongs to the MurB family. FAD serves as cofactor.

The protein localises to the cytoplasm. It carries out the reaction UDP-N-acetyl-alpha-D-muramate + NADP(+) = UDP-N-acetyl-3-O-(1-carboxyvinyl)-alpha-D-glucosamine + NADPH + H(+). Its pathway is cell wall biogenesis; peptidoglycan biosynthesis. In terms of biological role, cell wall formation. This is UDP-N-acetylenolpyruvoylglucosamine reductase from Moorella thermoacetica (strain ATCC 39073 / JCM 9320).